The primary structure comprises 67 residues: Large ribosomal subunit protein uL29 (67 aa).

Belongs to the universal ribosomal protein uL29 family.

The protein is Large ribosomal subunit protein uL29 of Moorella thermoacetica (strain ATCC 39073 / JCM 9320).